The chain runs to 1483 residues: Dynein axonemal assembly factor 1 homolog (1483 aa).

LRR repeat units lie at residues 34-56 (RLNDVLYLHYQGFQCIESLEEYT), 57-78 (ELKCLWLECNAISEIQGLEKLS), 79-100 (KLKCLFLQNNLITKIENLDPCR), 101-122 (ELDTLNLSSNHIRKIQNIGTNV), 125-146 (VLNTLTISSNYLKDSESLSDLI), and 150-171 (TLSVLDLSNNRIDDILIVKIFE). In terms of domain architecture, LRRCT spans 185 to 223 (PVVSRLPQYRKTLILACKELTYLDSRPVFPRDRACAEAW). Disordered regions lie at residues 249–282 (SINCTIRMRNSHRPPDQQDPLLRSSDSEDDTCAE), 300–327 (EEVSGEQPISEDGTNSSSSLEDNDGTSS), 945–986 (DSGD…HGTK), and 1167–1213 (SENE…SIDD). Polar residues predominate over residues 311–327 (DGTNSSSSLEDNDGTSS). The segment covering 1183–1196 (TNDKESSDIMEKNG) has biased composition (basic and acidic residues).

Belongs to the DNAAF1 family.

The protein localises to the cell projection. It is found in the cilium. Functionally, cilium-specific protein required for cilia structures. The sequence is that of Dynein axonemal assembly factor 1 homolog (dtr) from Drosophila melanogaster (Fruit fly).